A 523-amino-acid polypeptide reads, in one-letter code: Synaptotagmin-10 (523 aa).

At 1–55 the chain is on the vesicular side; it reads MSFRKEDGVSSLCQKALHIITELCFAGQVEWDKCSGIFPADRSGQGGGGTDISVS. Positions 13-35 are cysteine motif; the sequence is CQKALHIITELCFAGQVEWDKCS. The chain crosses the membrane as a helical span at residues 56-76; it reads LLAVVVSFCGLALLVVSLFVF. Topologically, residues 77 to 523 are cytoplasmic; the sequence is WKLCWPCWKS…CSSPRPPSTP (447 aa). Thr-136 is modified (phosphothreonine). C2 domains are found at residues 231 to 352 and 363 to 496; these read TCGK…TVWK and DLGE…THWH. Residues Asp-262, Asp-268, Asp-320, Phe-321, Asp-322, Ser-325, Asp-328, Asp-394, Asp-400, Asp-454, and Asp-456 each coordinate Ca(2+).

This sequence belongs to the synaptotagmin family. In terms of assembly, homodimer; disulfide-linked via the cysteine motif. Can also form heterodimers with SYT3, SYT6, SYT7 and SYT9. The cofactor is Ca(2+).

Its subcellular location is the cytoplasmic vesicle. The protein localises to the secretory vesicle membrane. Functionally, ca(2+) sensor specifically required for the Ca(2+)-dependent exocytosis of secretory vesicles containing IGF1 in neurons of the olfactory bulb. Exocytosis of IGF1 is required for sensory perception of smell. Not involved in Ca(2+)-dependent synaptic vesicle exocytosis. Acts through Ca(2+) and phospholipid binding to the C2 domain: Ca(2+) induces binding of the C2-domains to phospholipid membranes and to assembled SNARE-complexes; both actions contribute to triggering exocytosis. The chain is Synaptotagmin-10 (Syt10) from Rattus norvegicus (Rat).